Reading from the N-terminus, the 278-residue chain is Deoxyuridine 5'-triphosphate nucleotidohydrolase (278 aa).

Substrate-binding positions include 171 to 173 (RSG) and 273 to 274 (FG).

It belongs to the dUTPase family. The cofactor is Mg(2+).

The catalysed reaction is dUTP + H2O = dUMP + diphosphate + H(+). In terms of biological role, involved in nucleotide metabolism: produces dUMP, the immediate precursor of thymidine nucleotides and decreases the intracellular concentration of dUTP to avoid uracil incorporation into viral DNA. The polypeptide is Deoxyuridine 5'-triphosphate nucleotidohydrolase (Homo sapiens (Human)).